The following is a 50-amino-acid chain: Ornatin-E (50 aa).

The Cell attachment site signature appears at 42 to 44 (RGD).

Belongs to the ornatin family.

It is found in the secreted. Potent inhibitor of fibrinogen interaction with platelet receptors expressed on glycoprotein IIb-IIIa complex. May prevent blood from clotting during either feeding and/or storage of ingested blood. The sequence is that of Ornatin-E from Placobdella ornata (Turtle leech).